Reading from the N-terminus, the 687-residue chain is Polyphosphate kinase (687 aa).

Asn45 is an ATP binding site. Positions 375 and 405 each coordinate Mg(2+). His435 serves as the catalytic Phosphohistidine intermediate. Positions 472, 568, and 596 each coordinate ATP.

The protein belongs to the polyphosphate kinase 1 (PPK1) family. The cofactor is Mg(2+). In terms of processing, an intermediate of this reaction is the autophosphorylated ppk in which a phosphate is covalently linked to a histidine residue through a N-P bond.

It catalyses the reaction [phosphate](n) + ATP = [phosphate](n+1) + ADP. Functionally, catalyzes the reversible transfer of the terminal phosphate of ATP to form a long-chain polyphosphate (polyP). This is Polyphosphate kinase from Burkholderia cenocepacia (strain HI2424).